The primary structure comprises 218 residues: Superoxide dismutase [Mn] 1 (218 aa).

His43, His98, Asp180, and His184 together coordinate Mn(2+).

This sequence belongs to the iron/manganese superoxide dismutase family. Homodimer. It depends on Mn(2+) as a cofactor.

It catalyses the reaction 2 superoxide + 2 H(+) = H2O2 + O2. Functionally, destroys superoxide anion radicals which are normally produced within the cells and which are toxic to biological systems. The chain is Superoxide dismutase [Mn] 1 (sodA1) from Bacillus cereus (strain ATCC 14579 / DSM 31 / CCUG 7414 / JCM 2152 / NBRC 15305 / NCIMB 9373 / NCTC 2599 / NRRL B-3711).